The following is a 1888-amino-acid chain: MVRERKCILCHIVYGSKKEMDEHMRSMLHHRELENLKGRDISHECRVCRVTEVGLSAYAKHISGQLHKDNVDAQEREDDGKEEEEEEYFDKELVQLIQERKEQSRQDEPPSNSQEVNSDDRQPQWRREDRIPYQDRESYSQPPRHHRGPPQRDWKWEKDGFNSTRKNSFPHSLRNSGGPRGSSVWHKGATRGSSTWFLNHSNSGGGWHSNNGMVDWNYNGTGRNSSWHSEGTGGFPSWHMNNSNGNWKSSVRGTNSWNYNGLGDKFQQGRNRNPNYQMEDMTKMWNKKSNKPSKYSQERCKWQRQDRDKAAKYRSPPEGYASDTFPSEGLLEFNFEQRESQTTKQTDTAASKINGKNGTKARDKFRRWTPYPSQKTLDLQSALKEVIGSKSDTLEKPLFNFSLITAGLRKPVDKTSNPPVIKTQKAGPPGSPSHKAISDGTAFCEVARACSITEQSEPHQKSNKIPLLKSPLLPLPTPKSGPHKQNLKNRSKNKETKSFPSGDHSHLLNTSTLEGSHGSSYTSKSLGLCPRVLKENKTVSGTQKEPDEKLNNTSQKAQDTVLQCPKTLQNPLPTTPKRMENDAKESSVEESAKDSLSIESQPHSAGNSAMTSDAENHGIKSEGVASLTTEVVSCSTHTVDKEQGSQIPGTPENLSTSPRNSTVLQKEAEVQVSAATSPHSGLLLDLKTSLEDAQDNNLVKSDGPFETESFEDTSLDTELQKPDLNNQPPGTLLPELSKLGFPASLQRDLSRHISLKSKTGTHLPEPNLNSARRIRNVSGHRKNETEKESGLKPTLRQILNASRRNVNWEQVIQQVTKKKQELGKGLPRFGIEMVPLVQNEQEVLDLDEEPDLSSLEGFQWEGVSIPSSSGLARKRSLSESSVVMDRAPVYSFFTGEGTGKENEAQQSPSPNTALSAAQSQKTAMYLEQEVAPLTPSVGTGERVGNIPTQRRHSAQLPSGHIMPVMHSARDLHSQERSTPLSERHAQESTGEGNSLSSNASSGHAVSSLADAATDSSCTSGAEQTDGHSIRKKRRATGDGSSPELPSLERKNKRRKIKGKKERSQVDQLLTISLREEELSKSLQCMDNKLLQARAALQTAYVEVQRLLVLKQQITVEMSALRTHRIQILQGLQETYEPPEHPDQAPCSLISREQRNSRSQTSFETALLPAPFFPGFLDPPPSHASLPSPGNPLQITMSTFQAHGTAPDSSVQIKQEPMSPEQEGNMNALPQGCASNVSKELLQTNRVVDDGSSVYPAIPAVIASESTENCQEVSKDLNFSVEQGNSRSKGNSPSCQSPDLPGINRGEETAKGSSGSEACSSSFLRLSFTPETPAEKETQSPADQPEQQAESTLASAETRGSKKKKKLRKKKTLRATHVPENSDTEQDVFTAKPARKVKTAKAAKGAKVTTSQTGQEQGTARDEPDSDSSLEVLEVTNPQLEVVAIDTSESGDEKPDSPSKKDAWIAAEQNPIETSRSGCDEVSSTSELGTRYKDGVPVSVAETQTVISIKASKHSSEISSEPGDDEEPTEGSFEGHQAAVNAIQIFGNFLYTCSADTTVRVYNLVSRKCVGVFEGHTSKVNCLLVTHTSGKSSVLYTGSSDHTIRCYNIKTRECMEQLQLEDRVLCLHNRWRTLYAGLANGTVVTFDIKNNKRQEIFECHGPRAVSCLATAQEGARKLLVVGSYDCTISVRDARNGLLLRTLEGHSKTVLCMKVVNDLVFSGSSDQSVHAHNIHTGELVRIYKGHNHAVTVVNILGKVMVTACLDKFVRVYELQSHDRLQVYGGHKDMIMCMTIHKSVIYTGCYDGSIQAVRLNLMQNYRCWWYGCTLIFGVVDHLKQHLLTDHTNPNFQTLKCRWRNCDAFFTARKGSKQDVAGHIERHAEDDSKIDS.

The C2H2-type 1; atypical zinc finger occupies 5–29 (RKCILCHIVYGSKKEMDEHMRSMLH). The segment at 43–67 (HECRVCRVTEVGLSAYAKHISGQLH) adopts a C2H2-type 2; atypical zinc-finger fold. The segment at 68 to 187 (KDNVDAQERE…GPRGSSVWHK (120 aa)) is disordered. Residues 75-89 (EREDDGKEEEEEEYF) show a composition bias toward acidic residues. Composition is skewed to basic and acidic residues over residues 90 to 108 (DKEL…RQDE), 118 to 138 (SDDR…DRES), and 150 to 160 (PQRDWKWEKDG). Lys-91 is covalently cross-linked (Glycyl lysine isopeptide (Lys-Gly) (interchain with G-Cter in SUMO2)). A Glycyl lysine isopeptide (Lys-Gly) (interchain with G-Cter in SUMO2) cross-link involves residue Lys-155. The span at 161 to 175 (FNSTRKNSFPHSLRN) shows a compositional bias: polar residues. Glycyl lysine isopeptide (Lys-Gly) (interchain with G-Cter in SUMO2) cross-links involve residues Lys-265 and Lys-309. Disordered regions lie at residues 287–326 (KKSN…DTFP) and 338–362 (RESQ…TKAR). Basic and acidic residues predominate over residues 296–311 (SQERCKWQRQDRDKAA). Polar residues predominate over residues 342 to 357 (TTKQTDTAASKINGKN). Residues Lys-375, Lys-384, Lys-390, Lys-435, Lys-469, and Lys-479 each participate in a glycyl lysine isopeptide (Lys-Gly) (interchain with G-Cter in SUMO2) cross-link. 2 disordered regions span residues 410-437 (KPVD…HKAI) and 453-525 (TEQS…TSKS). The segment covering 481–491 (GPHKQNLKNRS) has biased composition (basic residues). A compositionally biased stretch (polar residues) spans 507–525 (LLNTSTLEGSHGSSYTSKS). Glycyl lysine isopeptide (Lys-Gly) (interchain with G-Cter in SUMO2) cross-links involve residues Lys-524, Lys-534, and Lys-544. The disordered stretch occupies residues 537-617 (KTVSGTQKEP…SAMTSDAENH (81 aa)). The segment covering 551–572 (NNTSQKAQDTVLQCPKTLQNPL) has biased composition (polar residues). Residue Lys-577 forms a Glycyl lysine isopeptide (Lys-Gly) (interchain with G-Cter in SUMO2) linkage. Residues 577 to 593 (KRMENDAKESSVEESAK) are compositionally biased toward basic and acidic residues. A compositionally biased stretch (polar residues) spans 597 to 613 (SIESQPHSAGNSAMTSD). Residue Lys-620 forms a Glycyl lysine isopeptide (Lys-Gly) (interchain with G-Cter in SUMO2) linkage. The disordered stretch occupies residues 635 to 661 (STHTVDKEQGSQIPGTPENLSTSPRNS). Positions 644–661 (GSQIPGTPENLSTSPRNS) are enriched in polar residues. 2 positions are modified to phosphoserine: Ser-657 and Ser-677. Residues Lys-687, Lys-700, Lys-721, Lys-738, Lys-758, Lys-792, and Lys-824 each participate in a glycyl lysine isopeptide (Lys-Gly) (interchain with G-Cter in SUMO2) cross-link. Residues 696 to 728 (NNLVKSDGPFETESFEDTSLDTELQKPDLNNQP) are disordered. Phosphoserine is present on residues Ser-876, Ser-878, Ser-881, and Ser-909. The interval 894–920 (TGEGTGKENEAQQSPSPNTALSAAQSQ) is disordered. A compositionally biased stretch (polar residues) spans 904–920 (AQQSPSPNTALSAAQSQ). Residue Lys-921 forms a Glycyl lysine isopeptide (Lys-Gly) (interchain with G-Cter in SUMO2) linkage. Residue Ser-953 is modified to Phosphoserine. Residues 968–986 (ARDLHSQERSTPLSERHAQ) show a composition bias toward basic and acidic residues. 3 disordered regions span residues 968–1064 (ARDL…ERSQ), 1281–1461 (EQGN…SKKD), and 1468–1487 (QNPI…TSEL). Positions 992 to 1008 (GNSLSSNASSGHAVSSL) are enriched in low complexity. A compositionally biased stretch (polar residues) spans 1013-1022 (TDSSCTSGAE). Thr-1036 is subject to Phosphothreonine. Phosphoserine occurs at positions 1040, 1041, and 1046. Over residues 1050–1060 (KNKRRKIKGKK) the composition is skewed to basic residues. Residues 1281 to 1296 (EQGNSRSKGNSPSCQS) are compositionally biased toward polar residues. A phosphoserine mark is found at Ser-1291, Ser-1293, and Ser-1296. Residue Lys-1310 forms a Glycyl lysine isopeptide (Lys-Gly) (interchain with G-Cter in SUMO2) linkage. Positions 1312 to 1321 (SSGSEACSSS) are enriched in low complexity. Ser-1313 carries the phosphoserine modification. Residue Lys-1335 forms a Glycyl lysine isopeptide (Lys-Gly) (interchain with G-Cter in SUMO2) linkage. Positions 1338–1354 (QSPADQPEQQAESTLAS) are enriched in polar residues. Ser-1339 bears the Phosphoserine mark. Over residues 1360–1373 (SKKKKKLRKKKTLR) the composition is skewed to basic residues. A Phosphoserine modification is found at Ser-1381. Thr-1383 bears the Phosphothreonine mark. Residues Lys-1391, Lys-1403, Lys-1406, and Lys-1460 each participate in a glycyl lysine isopeptide (Lys-Gly) (interchain with G-Cter in SUMO2) cross-link. The span at 1450-1461 (GDEKPDSPSKKD) shows a compositional bias: basic and acidic residues. The span at 1470 to 1487 (PIETSRSGCDEVSSTSEL) shows a compositional bias: polar residues. Ser-1474 carries the phosphoserine modification. Glycyl lysine isopeptide (Lys-Gly) (interchain with G-Cter in SUMO2) cross-links involve residues Lys-1492 and Lys-1509. Residues 1509 to 1531 (KASKHSSEISSEPGDDEEPTEGS) form a disordered region. WD repeat units lie at residues 1534 to 1573 (GHQA…GVFE), 1575 to 1618 (HTSK…EQLQ), 1659 to 1700 (HGPR…LLRT), 1703 to 1742 (GHSK…RIYK), 1743 to 1780 (GHNH…RLQV), and 1783 to 1820 (GHKD…NYRC). Residue Lys-1590 forms a Glycyl lysine isopeptide (Lys-Gly) (interchain with G-Cter in SUMO2) linkage. Lys-1742 is covalently cross-linked (Glycyl lysine isopeptide (Lys-Gly) (interchain with G-Cter in SUMO2)). The C2H2-type 3; atypical zinc finger occupies 1818–1843 (YRCWWYGCTLIFGVVDHLKQHLLTDH). Lys-1869 is covalently cross-linked (Glycyl lysine isopeptide (Lys-Gly) (interchain with G-Cter in SUMO2)).

In terms of assembly, interacts with KNOP1. Interacts with TARDBP and NUP107. Interacts (via N-terminus) with RBM39. Interacts with the SH3 domains of FYN and GRB2. In terms of processing, phosphorylated by FYN in vitro. In terms of tissue distribution, widely expressed, with strongest expression in skeletal muscle, heart and brain (at protein level). Detected in spinal cord motor neurons.

It is found in the nucleus. Its subcellular location is the nucleolus. The protein localises to the nucleus speckle. RNA-binding protein. Specifically binds to 5'-GGGGCC-3' sequence repeats in RNA. Essential for maintenance of peripheral motor neuron and skeletal muscle function. Required for normal expression and/or alternative splicing of a number of genes in spinal cord and skeletal muscle, including the neurite outgrowth inhibitor RTN4. Also contributes to normal mitochondrial respiratory function in motor neurons, via an unknown mechanism. The protein is Zinc finger protein 106 (Znf106) of Mus musculus (Mouse).